A 215-amino-acid polypeptide reads, in one-letter code: Protein Syd (215 aa).

The protein belongs to the Syd family.

It is found in the cell inner membrane. Its function is as follows. Interacts with the SecY protein in vivo. May bind preferentially to an uncomplexed state of SecY, thus functioning either as a chelating agent for excess SecY in the cell or as a regulatory factor that negatively controls the translocase function. In Shewanella amazonensis (strain ATCC BAA-1098 / SB2B), this protein is Protein Syd.